Here is a 175-residue protein sequence, read N- to C-terminus: Small ribosomal subunit protein uS5 (175 aa).

Residues 1–21 form a disordered region; the sequence is MAKPERNKKPQQAEERDDGMR. The region spanning 20–83 is the S5 DRBM domain; that stretch reads MREKMVAVNR…EEARRKMAKV (64 aa).

The protein belongs to the universal ribosomal protein uS5 family. In terms of assembly, part of the 30S ribosomal subunit. Contacts proteins S4 and S8.

In terms of biological role, with S4 and S12 plays an important role in translational accuracy. Its function is as follows. Located at the back of the 30S subunit body where it stabilizes the conformation of the head with respect to the body. This Dechloromonas aromatica (strain RCB) protein is Small ribosomal subunit protein uS5.